A 384-amino-acid polypeptide reads, in one-letter code: Putative dioxygenase SSO1533 (384 aa).

Positions 296, 302, and 332 each coordinate Fe cation.

This sequence belongs to the homogentisate dioxygenase family. Fe cation serves as cofactor.

This chain is Putative dioxygenase SSO1533, found in Saccharolobus solfataricus (strain ATCC 35092 / DSM 1617 / JCM 11322 / P2) (Sulfolobus solfataricus).